A 476-amino-acid polypeptide reads, in one-letter code: 3-isopropylmalate dehydratase large subunit (476 aa).

[4Fe-4S] cluster contacts are provided by C353, C413, and C416.

It belongs to the aconitase/IPM isomerase family. LeuC type 1 subfamily. In terms of assembly, heterodimer of LeuC and LeuD. The cofactor is [4Fe-4S] cluster.

It carries out the reaction (2R,3S)-3-isopropylmalate = (2S)-2-isopropylmalate. It functions in the pathway amino-acid biosynthesis; L-leucine biosynthesis; L-leucine from 3-methyl-2-oxobutanoate: step 2/4. Catalyzes the isomerization between 2-isopropylmalate and 3-isopropylmalate, via the formation of 2-isopropylmaleate. This is 3-isopropylmalate dehydratase large subunit from Photobacterium profundum (strain SS9).